Consider the following 208-residue polypeptide: MPPKRQNTETRKARQNRARRSRQQALAKLAREFSGLSMSVERSPSTSWADITESESRLKLIPGFTATEVTFDPSLTFGTHTGFATAERSLTVPDALLESPNLRLNRVAVVVLLDPTVPEAHKFWCALGDRWVAPSVGSFPSNAVRITGREGKGHVIYHYPGKTVEHLAKLRVYLFATDYAIVGNNSPVATVKIFVEHEKIGQAEYIPL.

Basic and acidic residues predominate over residues 1–12 (MPPKRQNTETRK). Residues 1–23 (MPPKRQNTETRKARQNRARRSRQ) form a disordered region. Positions 13-22 (ARQNRARRSR) are enriched in basic residues.

The protein resides in the virion. Capsid protein self-assembles to form a quasi spherical capsid, about 25-35 nm. The chain is Capsid protein from Pelargonium zonate spot virus (isolate Tomato/Italy/1982) (PZSV).